The primary structure comprises 186 residues: Elongation factor P (186 aa).

The protein belongs to the elongation factor P family.

It is found in the cytoplasm. It functions in the pathway protein biosynthesis; polypeptide chain elongation. Involved in peptide bond synthesis. Stimulates efficient translation and peptide-bond synthesis on native or reconstituted 70S ribosomes in vitro. Probably functions indirectly by altering the affinity of the ribosome for aminoacyl-tRNA, thus increasing their reactivity as acceptors for peptidyl transferase. The chain is Elongation factor P from Pelagibacter ubique (strain HTCC1062).